Reading from the N-terminus, the 256-residue chain is tRNA-cytidine(32) 2-sulfurtransferase (256 aa).

Positions 35–40 (SGGKDS) match the PP-loop motif motif. [4Fe-4S] cluster contacts are provided by Cys110, Cys113, and Cys201.

This sequence belongs to the TtcA family. Homodimer. It depends on Mg(2+) as a cofactor. [4Fe-4S] cluster is required as a cofactor.

The protein resides in the cytoplasm. The catalysed reaction is cytidine(32) in tRNA + S-sulfanyl-L-cysteinyl-[cysteine desulfurase] + AH2 + ATP = 2-thiocytidine(32) in tRNA + L-cysteinyl-[cysteine desulfurase] + A + AMP + diphosphate + H(+). It functions in the pathway tRNA modification. Functionally, catalyzes the ATP-dependent 2-thiolation of cytidine in position 32 of tRNA, to form 2-thiocytidine (s(2)C32). The sulfur atoms are provided by the cysteine/cysteine desulfurase (IscS) system. This Coxiella burnetii (strain RSA 493 / Nine Mile phase I) protein is tRNA-cytidine(32) 2-sulfurtransferase.